Consider the following 927-residue polypeptide: DNA-binding protein RFX6 (927 aa).

2 disordered regions span residues 1–21 and 81–108; these read MAKVRELEEAFVQEQPSPQLP and NFSSEEEDADTQESKTKAADPQLSQKKS. The segment at residues 123–198 is a DNA-binding region (RFX-type winged-helix); the sequence is TLQWLEDNYI…YHYYGIGIKE (76 aa).

Belongs to the RFX family. As to quaternary structure, interacts with RFX3. In terms of tissue distribution, in the adult pancreas, expression is restricted to the islets where it could be detected in all endocrine lineages.

The protein localises to the nucleus. Functionally, transcription factor required to direct islet cell differentiation during endocrine pancreas development. Specifically required for the differentiation of 4 of the 5 islet cell types and for the production of insulin. Not required for pancreatic PP (polypeptide-producing) cells differentiation. Acts downstream of NEUROG3 and regulates the transcription factors involved in beta-cell maturation and function, thereby restricting the expression of the beta-cell differentiation and specification genes, and thus the beta-cell fate choice. Activates transcription by forming a heterodimer with RFX3 and binding to the X-box in the promoter of target genes. Involved in glucose-stimulated insulin secretion by promoting insulin and L-type calcium channel gene transcription. The protein is DNA-binding protein RFX6 (Rfx6) of Mus musculus (Mouse).